Consider the following 419-residue polypeptide: UDP-arabinose 4-epimerase 1 (419 aa).

The disordered stretch occupies residues 1–21 (MFSFGRARSQGRQNRSMSLGG). Residues 1-32 (MFSFGRARSQGRQNRSMSLGGLDYADPKKKNN) lie on the Cytoplasmic side of the membrane. Residues 33–51 (YLGKILLTASLTALCIFML) traverse the membrane as a helical; Signal-anchor for type II membrane protein segment. The Lumenal segment spans residues 52-419 (KQSPTFNTPS…GLTTSSVSVY (368 aa)). 72–103 (HVLVTGGAGYIGSHAALRLLKESYRVTIVDNL) is a binding site for NAD(+). Tyr-220 serves as the catalytic Proton acceptor.

The protein belongs to the NAD(P)-dependent epimerase/dehydratase family. NAD(+) serves as cofactor. High expression in roots. Also found in leaves, stems, flowers, and siliques.

The protein resides in the golgi apparatus. Its subcellular location is the golgi stack membrane. It carries out the reaction UDP-beta-L-arabinopyranose = UDP-alpha-D-xylose. The protein operates within nucleotide-sugar biosynthesis; UDP-L-arabinose biosynthesis; UDP-L-arabinose from UDP-alpha-D-xylose: step 1/1. It participates in cell wall biogenesis; cell wall polysaccharide biosynthesis. In terms of biological role, acts as a UDP-D-xylose 4-epimerase but lacks both UDP-D-glucose and UDP-D-glucuronic acid 4-epimerase activities in vitro. The chain is UDP-arabinose 4-epimerase 1 from Arabidopsis thaliana (Mouse-ear cress).